The chain runs to 78 residues: MSKEKLDRINELSKLAKTVGLTKKQAMEQKALRNEYLSAFRSSFTDHLHTVKVVDAKGNDVTPQKLKDSKAQKHKRLH.

Residues 56-78 (AKGNDVTPQKLKDSKAQKHKRLH) form a disordered region.

This sequence belongs to the UPF0291 family.

The protein localises to the cytoplasm. This chain is UPF0291 protein ABC2165, found in Shouchella clausii (strain KSM-K16) (Alkalihalobacillus clausii).